The sequence spans 613 residues: Transcription factor Sp2 (613 aa).

The disordered stretch occupies residues 1 to 32 (MSDPQTSMAATAAVSPSDYLQPAASTTQDSQP). Residues 23–32 (AASTTQDSQP) are compositionally biased toward polar residues. The residue at position 78 (Ser-78) is a Phosphoserine. A compositionally biased stretch (polar residues) spans 225–235 (TGAPTQLLTES). The disordered stretch occupies residues 225–258 (TGAPTQLLTESPPTPLSKTNKKARKKSLPASQPP). A 9aaTAD; inactive motif is present at residues 361-369 (GEVQTVLVQ). Low complexity predominate over residues 372-389 (PPATAAATSNTTCSSPAS). The interval 372 to 404 (PPATAAATSNTTCSSPASRAPHLSGTSKKHSAA) is disordered. 3 consecutive C2H2-type zinc fingers follow at residues 525–549 (HVCH…VRLH), 555–579 (FVCN…ARTH), and 585–607 (FECA…YKTH).

Belongs to the Sp1 C2H2-type zinc-finger protein family.

The protein resides in the nucleus. Binds to GC box promoters elements and selectively activates mRNA synthesis from genes that contain functional recognition sites. This Homo sapiens (Human) protein is Transcription factor Sp2 (SP2).